The chain runs to 224 residues: Na(+)-translocating NADH-quinone reductase subunit D (224 aa).

5 helical membrane passes run 43-63 (TVMAIALTLVTGFSNLFISMI), 67-87 (IPSSIRMIVQMVIIASLVIVV), 104-124 (VFVGLIITNCIVMGRAEAFAM), 132-152 (FFDGIGNGLGYSAMLLVLGFV), and 179-199 (NGLLLLPPSAFFLIGLIIWAL).

The protein belongs to the NqrDE/RnfAE family. As to quaternary structure, composed of six subunits; NqrA, NqrB, NqrC, NqrD, NqrE and NqrF.

It is found in the cell inner membrane. The enzyme catalyses a ubiquinone + n Na(+)(in) + NADH + H(+) = a ubiquinol + n Na(+)(out) + NAD(+). In terms of biological role, NQR complex catalyzes the reduction of ubiquinone-1 to ubiquinol by two successive reactions, coupled with the transport of Na(+) ions from the cytoplasm to the periplasm. NqrA to NqrE are probably involved in the second step, the conversion of ubisemiquinone to ubiquinol. The protein is Na(+)-translocating NADH-quinone reductase subunit D of Pseudomonas aeruginosa (strain LESB58).